The sequence spans 187 residues: dTTP/UTP pyrophosphatase (187 aa).

Asp-65 functions as the Proton acceptor in the catalytic mechanism.

The protein belongs to the Maf family. YhdE subfamily. It depends on a divalent metal cation as a cofactor.

It is found in the cytoplasm. The enzyme catalyses dTTP + H2O = dTMP + diphosphate + H(+). It carries out the reaction UTP + H2O = UMP + diphosphate + H(+). Nucleoside triphosphate pyrophosphatase that hydrolyzes dTTP and UTP. May have a dual role in cell division arrest and in preventing the incorporation of modified nucleotides into cellular nucleic acids. The chain is dTTP/UTP pyrophosphatase from Pyrococcus abyssi (strain GE5 / Orsay).